Consider the following 706-residue polypeptide: Solute carrier organic anion transporter family member 6C1 (706 aa).

A disordered region spans residues 1–24; it reads MAHVRNKKSDDKKAMVVAKEDTNK. The Cytoplasmic portion of the chain corresponds to 1 to 94; sequence MAHVRNKKSD…PFVQRFNNID (94 aa). The segment covering 7–24 has biased composition (basic and acidic residues); sequence KKSDDKKAMVVAKEDTNK. A helical membrane pass occupies residues 95–118; that stretch reads GFMTLYVAAVLIHGALFAVVDMTL. The Extracellular segment spans residues 119–130; the sequence is NIYQVQFSLTRT. The helical transmembrane segment at 131–151 threads the bilayer; sequence EWYLMDFSDYIASFVVAIIIA. Topologically, residues 152-159 are cytoplasmic; the sequence is HFGSKGNR. A helical transmembrane segment spans residues 160-180; sequence TRWIAASCILMGLESMLFAFP. The Extracellular portion of the chain corresponds to 181–218; that stretch reads FFTYEIIIPGRQSIELCMEENEKRNIICGNSVPNRSKC. The N-linked (GlcNAc...) asparagine glycan is linked to N214. Residues 219–241 form a helical membrane-spanning segment; sequence IYFHIAGQCIHGIAGMPIYILGI. Residues 242-253 are Cytoplasmic-facing; sequence TFIFDHIPTSSC. Residues 254-277 traverse the membrane as a helical segment; it reads GFYLAIGHSAYLIGYLLGMVGGLQ. Residues 278–301 are Extracellular-facing; that stretch reads NFQPPPKEKTVEIEPAKVYQLLQS. A helical transmembrane segment spans residues 302–324; the sequence is GWWKTFLIIAAISFCVSFMMVCF. Topologically, residues 325–374 are cytoplasmic; that stretch reads PTSLPGAHKLRLAKRKEPPTIDRRLKDMKIQPHLKGFLHNIWHILKNPLM. The helical transmembrane segment at 375-396 threads the bilayer; it reads LTQAICKVSEYLTFNTSLYFLP. At 397-410 the chain is on the extracellular side; the sequence is HHLQTQFLITPGIA. The helical transmembrane segment at 411–432 threads the bilayer; that stretch reads SLLTGAFVLPGGIIGHFLGGLI. Residues 433–445 lie on the Cytoplasmic side of the membrane; that stretch reads VDRLEMTNKNKLK. Residues 446 to 466 form a helical membrane-spanning segment; sequence FTLVTTVVSVGLFLLIFFVEC. The Extracellular portion of the chain corresponds to 467 to 565; sequence QTTTFAGINE…IAGTCDSDCL (99 aa). Residues 485–540 form the Kazal-like domain; sequence GNLTADCNEYCDCTTSLYTSICGRDEKEYFSPCFAGCKATKVSQTEKTYYNCSCIK. An N-linked (GlcNAc...) asparagine glycan is attached at N486. 3 cysteine pairs are disulfide-bonded: C491/C521, C497/C517, and C506/C538. N-linked (GlcNAc...) asparagine glycosylation is present at N535. A helical transmembrane segment spans residues 566–589; it reads KLPLFFAFYFSATVFSNMCSIPVI. The Cytoplasmic portion of the chain corresponds to 590 to 604; sequence SIILQSVPANFTSLS. The helical transmembrane segment at 605–624 threads the bilayer; that stretch reads LGVTYAIVKFVASVPAPLLF. Over 625-652 the chain is Extracellular; the sequence is RLSSAIACIYWDNNRCGGKERCWIYNKN. The chain crosses the membrane as a helical span at residues 653–675; it reads ILVYEFMGIWMSSQLIIVLLNIY. Residues 676-706 are Cytoplasmic-facing; sequence AIQIHDVVVHGEITESKTTVKDVKEQKERKA.

The protein belongs to the organo anion transporter (TC 2.A.60) family. Component of the CatSper complex or CatSpermasome composed of the core pore-forming members CATSPER1, CATSPER2, CATSPER3 and CATSPER4 as well as auxiliary members CATSPERB, CATSPERG2, CATSPERD, CATSPERE, CATSPERZ, C2CD6/CATSPERT, SLCO6C1, TMEM249, TMEM262 and EFCAB9. HSPA1 may be an additional auxiliary complex member. The core complex members CATSPER1, CATSPER2, CATSPER3 and CATSPER4 form a heterotetrameric channel. The auxiliary CATSPERB, CATSPERG2, CATSPERD and CATSPERE subunits form a pavilion-like structure over the pore which stabilizes the complex through interactions with CATSPER4, CATSPER3, CATSPER1 and CATSPER2 respectively. SLCO6C1 interacts with CATSPERE and TMEM262/CATSPERH interacts with CATSPERB, further stabilizing the complex. C2CD6/CATSPERT interacts at least with CATSPERD and is required for targeting the CatSper complex in the flagellar membrane.

The protein localises to the cell projection. It is found in the cilium. Its subcellular location is the flagellum membrane. Its function is as follows. Auxiliary component of the CatSper complex, a complex involved in sperm cell hyperactivation. This chain is Solute carrier organic anion transporter family member 6C1, found in Mus musculus (Mouse).